The chain runs to 155 residues: Rhombotin-1 (155 aa).

LIM zinc-binding domains lie at 21-83 and 85-147; these read KGCA…LFGT and GNCA…GQLN.

It is found in the nucleus. May be involved in gene regulation within neural lineage cells potentially by direct DNA binding or by binding to other transcription factors. The polypeptide is Rhombotin-1 (Danio rerio (Zebrafish)).